The chain runs to 90 residues: Auxin-responsive protein SAUR23 (90 aa).

This sequence belongs to the ARG7 family.

It localises to the cell membrane. Functionally, functions as a positive effector of cell expansion through modulation of auxin transport. The sequence is that of Auxin-responsive protein SAUR23 from Arabidopsis thaliana (Mouse-ear cress).